Here is a 354-residue protein sequence, read N- to C-terminus: Ferrochelatase (354 aa).

Residues His-204 and Glu-306 each coordinate Fe cation.

Belongs to the ferrochelatase family.

It localises to the cytoplasm. The enzyme catalyses heme b + 2 H(+) = protoporphyrin IX + Fe(2+). The protein operates within porphyrin-containing compound metabolism; protoheme biosynthesis; protoheme from protoporphyrin-IX: step 1/1. In terms of biological role, catalyzes the ferrous insertion into protoporphyrin IX. This chain is Ferrochelatase, found in Coxiella burnetii (strain CbuK_Q154) (Coxiella burnetii (strain Q154)).